We begin with the raw amino-acid sequence, 381 residues long: N-acetyldiaminopimelate deacetylase (381 aa).

Asp-71 is a catalytic residue. Glu-130 serves as the catalytic Proton acceptor.

It belongs to the peptidase M20A family. N-acetyldiaminopimelate deacetylase subfamily.

It carries out the reaction N-acetyl-(2S,6S)-2,6-diaminopimelate + H2O = (2S,6S)-2,6-diaminopimelate + acetate. The protein operates within amino-acid biosynthesis; L-lysine biosynthesis via DAP pathway; LL-2,6-diaminopimelate from (S)-tetrahydrodipicolinate (acetylase route): step 3/3. Catalyzes the conversion of N-acetyl-diaminopimelate to diaminopimelate and acetate. This Ligilactobacillus salivarius (strain UCC118) (Lactobacillus salivarius) protein is N-acetyldiaminopimelate deacetylase.